A 417-amino-acid chain; its full sequence is Aromatic-amino-acid aminotransferase 1 (417 aa).

The residue at position 258 (Lys258) is an N6-(pyridoxal phosphate)lysine.

The protein belongs to the class-I pyridoxal-phosphate-dependent aminotransferase family. As to quaternary structure, homodimer. The cofactor is pyridoxal 5'-phosphate.

It carries out the reaction an aromatic L-alpha-amino acid + 2-oxoglutarate = an aromatic oxo-acid + L-glutamate. In terms of biological role, catalyzes the transamination of phenylalanine, tyrosine and tryptophan. Shows virtually no activity towards aspartic acid, alanine, valine or isoleucine. In Thermococcus litoralis (strain ATCC 51850 / DSM 5473 / JCM 8560 / NS-C), this protein is Aromatic-amino-acid aminotransferase 1.